Reading from the N-terminus, the 112-residue chain is Cuticle protein AM1239 (112 aa).

Positions 16-85 constitute a Chitin-binding type R&amp;R domain; sequence DGNFNYRFET…FIPTDHPLPA (70 aa). Threonine 79 carries O-linked (HexNAc) threonine glycosylation.

Arthrodial membrane.

The chain is Cuticle protein AM1239 from Cancer pagurus (Rock crab).